Here is a 380-residue protein sequence, read N- to C-terminus: Queuine tRNA-ribosyltransferase (380 aa).

The active-site Proton acceptor is the aspartate 95. Substrate contacts are provided by residues 95–99, aspartate 149, glutamine 192, and glycine 219; that span reads DSGGF. Residues 250-256 are RNA binding; that stretch reads GVGSPDS. Residue aspartate 269 is the Nucleophile of the active site. The RNA binding; important for wobble base 34 recognition stretch occupies residues 274 to 278; sequence TRIGR. Zn(2+) contacts are provided by cysteine 307, cysteine 309, cysteine 312, and histidine 338.

The protein belongs to the queuine tRNA-ribosyltransferase family. As to quaternary structure, homodimer. Within each dimer, one monomer is responsible for RNA recognition and catalysis, while the other monomer binds to the replacement base PreQ1. Zn(2+) serves as cofactor.

The catalysed reaction is 7-aminomethyl-7-carbaguanine + guanosine(34) in tRNA = 7-aminomethyl-7-carbaguanosine(34) in tRNA + guanine. The protein operates within tRNA modification; tRNA-queuosine biosynthesis. Its function is as follows. Catalyzes the base-exchange of a guanine (G) residue with the queuine precursor 7-aminomethyl-7-deazaguanine (PreQ1) at position 34 (anticodon wobble position) in tRNAs with GU(N) anticodons (tRNA-Asp, -Asn, -His and -Tyr). Catalysis occurs through a double-displacement mechanism. The nucleophile active site attacks the C1' of nucleotide 34 to detach the guanine base from the RNA, forming a covalent enzyme-RNA intermediate. The proton acceptor active site deprotonates the incoming PreQ1, allowing a nucleophilic attack on the C1' of the ribose to form the product. After dissociation, two additional enzymatic reactions on the tRNA convert PreQ1 to queuine (Q), resulting in the hypermodified nucleoside queuosine (7-(((4,5-cis-dihydroxy-2-cyclopenten-1-yl)amino)methyl)-7-deazaguanosine). The polypeptide is Queuine tRNA-ribosyltransferase (Geobacillus thermodenitrificans (strain NG80-2)).